The sequence spans 1579 residues: MKVELSKVPILGKDVVHVGFDIADHIVDTIFQSCPSSTYVVINDTNVEKIPHYVDLCGELQAKLKSGSRILQYSVKPGEAHKTREQKAAIEDYLLSEGCTRDTVIIAVGGGVIGDMIGYVASTFMRGVRVVQVPTSLLAMVDSSIGGKTAVDTPLGKNFIGAFWQPQFVFVDIKWLETLPKREFINGIAEVIKTACIWNAEEFARLEENADLFLQVVNGSKTTQVSVQGQVHELSLTNIDAMLEHVYRLVLESIKVKTHVVSSDEREAGLRNLLNFGHTIGHAYEAILTPQALHGECVSIGMIKEAELSRYLNILSPTQVARLTKILAAYGLPISPDQKWFKDLTLNKKTPLDVLLKKMSIDKKNDGSKKKAVLLETIGKCYGTSAHVVSDEDIRFVLTDETLVYPFKTLENGQEKTIVPPGSKSISNRALILAALGEGTCKIKNLLHSDDTKHMLHAVQQLKGATITWEDNGETVVLKGHGGSTLQATAEPLYLGNAGTASRFLTSVAALVNSTSSQKSVVLTGNARMQERPIGPLVDSLRENGISIDYLNKEKSLPLKINTDSNFKGGRIELAATVSSQYVSSILMCAPYAEEPVTLALVGGKPISKLYIDMTIKMMEKFGIYVKASTEEPNTYHIPKGHYVNPPEYVIESDASSATYPLAYAAMTGTTVTVPNIGFESLQGDARFARDVLKPMGCSVTQTETSTTVTGPPVGGLKPLKHVDMEPMTDAFLTACVVAAVAHDGKEGSRNTTTIEGIANQRVKECNRILAMVDELAKFGVEANELPDGIQVHGLSSIDKLKVPEAIHSYDDHRVAMSFSLLAGMVGATKDALSEPVRILERSCTGKTWPGWWDVLHTQLGAKLDGSEPLQSAVKKNSNSSIVIIGMRAAGKTTVSSWCANALGFKFLDLDTVFEEQYKKGSVKEFVAEHGWDAFRATETKIFEESVKKYGEGYVLSTGGGIVEGAASRKSLKQFASQGGIVLHLHRDIDETIKFLNSDPTRPAYNEDIRNVWERREEWYKECANFTFYAPHCTSSTQFNQLRKTFETFIRTISGKREVKIPTNRSSFVCLTFDDLAAHKEKIPDITAGCSAVELRVDQLKSYDLDFVAKQLSILRLASSSLPIIFTIRTKSQGGQFPDDDKSTLGSLLSLALEVGVEFVDMELTLSSELQYSLVNNKRNTKIIGSHHDFDAKFDWNDSEWENRYNQALSLDVDVVKFVGTAKDFEDNLKLEQFRLQHTAKPLIAINMTDVGKMSRVLNTVLTPVTSSLLPSASAPGQLTLSQINEIYTLLGGFSAKNFYVVGSPISHSRSPVLHNTGYKILGLPHKFEKFETSSASEVKDKLLSKCKLGGLAVTIPLKLDIMEFMDELSESAKLIGAVNTVIPLGDGKFKGDNTDWLGIYNSFLANGVPENVRGNSGFVIGAGGTSRAAVYALHQLGCSDIHLVNRTVEKPHDLKKSFPSEYNLHVLEDSQQAEGISGSVALAVSCVPADKPLDDNLLARVRAVLAKAQGTSFKPTLLEAAYKPAVTPMMKTASDEFSWHIIPGSQMLVHQGVAQFQLWTGFRAPFNAIYSAVTEEQA.

Residues 1–391 form a 3-dehydroquinate synthase region; the sequence is MKVELSKVPI…YGTSAHVVSD (391 aa). Residues 44 to 46, 79 to 82, 110 to 112, and aspartate 115 contribute to the NAD(+) site; these read DTN, EAHK, and GGV. Arginine 126 contributes to the 7-phospho-2-dehydro-3-deoxy-D-arabino-heptonate binding site. 135 to 136 serves as a coordination point for NAD(+); it reads TS. Positions 142 and 148 each coordinate 7-phospho-2-dehydro-3-deoxy-D-arabino-heptonate. Residue lysine 157 coordinates NAD(+). Asparagine 158 lines the 7-phospho-2-dehydro-3-deoxy-D-arabino-heptonate pocket. Residues 175–178 and asparagine 186 contribute to the NAD(+) site; that span reads WLET. Glutamate 190 serves as a coordination point for Zn(2+). 7-phospho-2-dehydro-3-deoxy-D-arabino-heptonate contacts are provided by residues 190 to 193 and lysine 257; that span reads EVIK. Catalysis depends on glutamate 267, which acts as the Proton acceptor; for 3-dehydroquinate synthase activity. Residues 271 to 275 and histidine 278 contribute to the 7-phospho-2-dehydro-3-deoxy-D-arabino-heptonate site; that span reads RNLLN. Histidine 278 contacts Zn(2+). Histidine 282 (proton acceptor; for 3-dehydroquinate synthase activity) is an active-site residue. Histidine 294 and lysine 363 together coordinate 7-phospho-2-dehydro-3-deoxy-D-arabino-heptonate. Histidine 294 is a binding site for Zn(2+). Positions 404 to 862 are EPSP synthase; the sequence is VYPFKTLENG…WDVLHTQLGA (459 aa). Cysteine 844 functions as the For EPSP synthase activity in the catalytic mechanism. The interval 881–1070 is shikimate kinase; that stretch reads SIVIIGMRAA…IPTNRSSFVC (190 aa). 886-893 contacts ATP; that stretch reads GMRAAGKT. A 3-dehydroquinase region spans residues 1071 to 1283; the sequence is LTFDDLAAHK…SAPGQLTLSQ (213 aa). Histidine 1188 functions as the Proton acceptor; for 3-dehydroquinate dehydratase activity in the catalytic mechanism. Lysine 1217 acts as the Schiff-base intermediate with substrate; for 3-dehydroquinate dehydratase activity in catalysis. A shikimate dehydrogenase region spans residues 1296-1579; the sequence is AKNFYVVGSP…IYSAVTEEQA (284 aa).

In the N-terminal section; belongs to the sugar phosphate cyclases superfamily. Dehydroquinate synthase family. The protein in the 2nd section; belongs to the EPSP synthase family. It in the 3rd section; belongs to the shikimate kinase family. This sequence in the 4th section; belongs to the type-I 3-dehydroquinase family. In the C-terminal section; belongs to the shikimate dehydrogenase family. As to quaternary structure, homodimer. Zn(2+) is required as a cofactor.

Its subcellular location is the cytoplasm. It carries out the reaction 7-phospho-2-dehydro-3-deoxy-D-arabino-heptonate = 3-dehydroquinate + phosphate. It catalyses the reaction 3-dehydroquinate = 3-dehydroshikimate + H2O. The enzyme catalyses shikimate + NADP(+) = 3-dehydroshikimate + NADPH + H(+). The catalysed reaction is shikimate + ATP = 3-phosphoshikimate + ADP + H(+). It carries out the reaction 3-phosphoshikimate + phosphoenolpyruvate = 5-O-(1-carboxyvinyl)-3-phosphoshikimate + phosphate. Its pathway is metabolic intermediate biosynthesis; chorismate biosynthesis; chorismate from D-erythrose 4-phosphate and phosphoenolpyruvate: step 2/7. It participates in metabolic intermediate biosynthesis; chorismate biosynthesis; chorismate from D-erythrose 4-phosphate and phosphoenolpyruvate: step 3/7. The protein operates within metabolic intermediate biosynthesis; chorismate biosynthesis; chorismate from D-erythrose 4-phosphate and phosphoenolpyruvate: step 4/7. It functions in the pathway metabolic intermediate biosynthesis; chorismate biosynthesis; chorismate from D-erythrose 4-phosphate and phosphoenolpyruvate: step 5/7. Its pathway is metabolic intermediate biosynthesis; chorismate biosynthesis; chorismate from D-erythrose 4-phosphate and phosphoenolpyruvate: step 6/7. The AROM polypeptide catalyzes 5 consecutive enzymatic reactions in prechorismate polyaromatic amino acid biosynthesis. This is Pentafunctional AROM polypeptide from Lachancea thermotolerans (strain ATCC 56472 / CBS 6340 / NRRL Y-8284) (Yeast).